We begin with the raw amino-acid sequence, 185 residues long: Crossover junction endodeoxyribonuclease RuvC (185 aa).

Active-site residues include aspartate 7, glutamate 66, and aspartate 137. Residues aspartate 7, glutamate 66, and aspartate 137 each coordinate Mg(2+).

This sequence belongs to the RuvC family. Homodimer which binds Holliday junction (HJ) DNA. The HJ becomes 2-fold symmetrical on binding to RuvC with unstacked arms; it has a different conformation from HJ DNA in complex with RuvA. In the full resolvosome a probable DNA-RuvA(4)-RuvB(12)-RuvC(2) complex forms which resolves the HJ. Mg(2+) serves as cofactor.

The protein resides in the cytoplasm. It catalyses the reaction Endonucleolytic cleavage at a junction such as a reciprocal single-stranded crossover between two homologous DNA duplexes (Holliday junction).. Functionally, the RuvA-RuvB-RuvC complex processes Holliday junction (HJ) DNA during genetic recombination and DNA repair. Endonuclease that resolves HJ intermediates. Cleaves cruciform DNA by making single-stranded nicks across the HJ at symmetrical positions within the homologous arms, yielding a 5'-phosphate and a 3'-hydroxyl group; requires a central core of homology in the junction. The consensus cleavage sequence is 5'-(A/T)TT(C/G)-3'. Cleavage occurs on the 3'-side of the TT dinucleotide at the point of strand exchange. HJ branch migration catalyzed by RuvA-RuvB allows RuvC to scan DNA until it finds its consensus sequence, where it cleaves and resolves the cruciform DNA. The protein is Crossover junction endodeoxyribonuclease RuvC of Anaeromyxobacter dehalogenans (strain 2CP-1 / ATCC BAA-258).